The following is a 346-amino-acid chain: DNA repair protein XRCC3 (346 aa).

N-acetylmethionine is present on M1. 107–114 serves as a coordination point for ATP; the sequence is GRSSAGKT.

Belongs to the RecA family. RAD51 subfamily. As to quaternary structure, interacts with RAD51C and RAD51. Part of the CX3 complex consisting of RAD51C and XRCC3; the complex has a ring-like structure arranged into a flat disk around a central channel; CX3 can interact with RAD51 in vitro. Forms a complex with FANCD2, BRCA2 and phosphorylated FANCG. Interacts with SWSAP1 and ZSWIM7; involved in homologous recombination repair. Interacts directly with PALB2 which may serve as a scaffold for a HR complex containing PALB2, BRCA2, RAD51C, RAD51 and XRCC3.

The protein localises to the nucleus. Its subcellular location is the cytoplasm. It localises to the perinuclear region. The protein resides in the mitochondrion. Its function is as follows. Involved in the homologous recombination repair (HRR) pathway of double-stranded DNA, thought to repair chromosomal fragmentation, translocations and deletions. Part of the RAD51 paralog protein complex CX3 which acts in the BRCA1-BRCA2-dependent HR pathway. Upon DNA damage, CX3 acts downstream of RAD51 recruitment; the complex binds predominantly to the intersection of the four duplex arms of the Holliday junction (HJ) and to junctions of replication forks. Involved in HJ resolution and thus in processing HR intermediates late in the DNA repair process; the function may be linked to the CX3 complex and seems to involve GEN1 during mitotic cell cycle progression. Part of a PALB2-scaffolded HR complex containing BRCA2 and RAD51C and which is thought to play a role in DNA repair by HR. Plays a role in regulating mitochondrial DNA copy number under conditions of oxidative stress in the presence of RAD51 and RAD51C. The protein is DNA repair protein XRCC3 (XRCC3) of Homo sapiens (Human).